The primary structure comprises 383 residues: S-adenosylmethionine synthase (383 aa).

His-15 contributes to the ATP binding site. Asp-17 provides a ligand contact to Mg(2+). Glu-43 is a binding site for K(+). Positions 56 and 99 each coordinate L-methionine. The interval 99-109 is flexible loop; that stretch reads QSPDINQGVDR. ATP contacts are provided by residues 164–166, 230–231, Asp-239, 245–246, Ala-262, and Lys-266; these read DAK, RF, and RK. Asp-239 contacts L-methionine. Lys-270 is an L-methionine binding site.

It belongs to the AdoMet synthase family. As to quaternary structure, homotetramer; dimer of dimers. The cofactor is Mg(2+). It depends on K(+) as a cofactor.

It is found in the cytoplasm. It catalyses the reaction L-methionine + ATP + H2O = S-adenosyl-L-methionine + phosphate + diphosphate. The protein operates within amino-acid biosynthesis; S-adenosyl-L-methionine biosynthesis; S-adenosyl-L-methionine from L-methionine: step 1/1. Catalyzes the formation of S-adenosylmethionine (AdoMet) from methionine and ATP. The overall synthetic reaction is composed of two sequential steps, AdoMet formation and the subsequent tripolyphosphate hydrolysis which occurs prior to release of AdoMet from the enzyme. This is S-adenosylmethionine synthase from Pectobacterium carotovorum subsp. carotovorum (strain PC1).